Reading from the N-terminus, the 166-residue chain is Signal peptidase complex catalytic subunit SEC11 (166 aa).

The Cytoplasmic segment spans residues 1–9; sequence MNIRQQITQ. The chain crosses the membrane as a helical; Signal-anchor for type II membrane protein span at residues 10–30; that stretch reads FLSLAYVFSSAFMLWKTLSVI. The Lumenal segment spans residues 31–166; sequence ANSHSPIVVV…LGLSSLFSNE (136 aa). Active-site charge relay system residues include S44, H83, and D108. A C-terminal short (CTS) helix region spans residues 152-163; that stretch reads GMLGLLGLSSLF.

It belongs to the peptidase S26B family. Component of the signal peptidase complex (SPC) composed of a catalytic subunit SEC11 and three accessory subunits SPC1, SPC2 and SPC3. The complex induces a local thinning of the ER membrane which is used to measure the length of the signal peptide (SP) h-region of protein substrates. This ensures the selectivity of the complex towards h-regions shorter than 18-20 amino acids. SPC associates with the translocon complex.

It is found in the endoplasmic reticulum membrane. The catalysed reaction is Cleavage of hydrophobic, N-terminal signal or leader sequences from secreted and periplasmic proteins.. Catalytic component of the signal peptidase complex (SPC) which catalyzes the cleavage of N-terminal signal sequences from nascent proteins as they are translocated into the lumen of the endoplasmic reticulum. Specifically cleaves N-terminal signal peptides that contain a hydrophobic alpha-helix (h-region) shorter than 18-20 amino acids. This Candida dubliniensis (strain CD36 / ATCC MYA-646 / CBS 7987 / NCPF 3949 / NRRL Y-17841) (Yeast) protein is Signal peptidase complex catalytic subunit SEC11 (SEC11).